Reading from the N-terminus, the 192-residue chain is 7-methyl-GTP pyrophosphatase (192 aa).

The active-site Proton acceptor is the Asp-69.

Belongs to the Maf family. YceF subfamily. A divalent metal cation serves as cofactor.

The protein resides in the cytoplasm. It carries out the reaction N(7)-methyl-GTP + H2O = N(7)-methyl-GMP + diphosphate + H(+). Functionally, nucleoside triphosphate pyrophosphatase that hydrolyzes 7-methyl-GTP (m(7)GTP). May have a dual role in cell division arrest and in preventing the incorporation of modified nucleotides into cellular nucleic acids. The chain is 7-methyl-GTP pyrophosphatase from Pseudomonas savastanoi pv. phaseolicola (strain 1448A / Race 6) (Pseudomonas syringae pv. phaseolicola (strain 1448A / Race 6)).